A 321-amino-acid polypeptide reads, in one-letter code: MSASVFVVVASCLAALAHGYANPGSCLGACNVHDPALIRRESDGKYFRFSTGNKISYASSSSIEGPWTVLGSVLPSGSSIDLPGNDDLWAPDVSLVNGVYHVYYSVSTFGSQSSAIGLATSSTMDLNSWTDHGSTGIQSSSSKPYNAIDGNLFKDGGTYYMNFGSFWHDIYQAPMNSAATSVASSSYNIAYNPSGTHAVEGAFMYKYGNYYYLFFSAGICCGYDTSRPASGEEYKIKVCRSTSATGNFVDANGVACTNGGGTVVLESHGNVYGPGGQGVFTDPSLGPILYYHYVDTTIGYADSQKLFGWNKIDFSSGWPVV.

The N-terminal stretch at 1–19 is a signal peptide; sequence MSASVFVVVASCLAALAHG. Asp-34 serves as the catalytic Proton acceptor. The Proton donor role is filled by Glu-200.

This sequence belongs to the glycosyl hydrolase 43 family.

The protein localises to the secreted. It catalyses the reaction Endohydrolysis of (1-&gt;5)-alpha-arabinofuranosidic linkages in (1-&gt;5)-arabinans.. The protein operates within glycan metabolism; L-arabinan degradation. Its function is as follows. Endo-1,5-alpha-L-arabinanase involved in degradation of pectin. Its preferred substrate is linear 1,5-alpha-L-arabinan. The chain is Probable arabinan endo-1,5-alpha-L-arabinosidase A (abnA) from Aspergillus fumigatus (strain ATCC MYA-4609 / CBS 101355 / FGSC A1100 / Af293) (Neosartorya fumigata).